Here is a 618-residue protein sequence, read N- to C-terminus: 1-deoxy-D-xylulose-5-phosphate synthase (618 aa).

Thiamine diphosphate is bound by residues H70 and 111–113; that span reads GHS. D142 contacts Mg(2+). Thiamine diphosphate is bound by residues 143 to 144, N171, Y278, and E360; that span reads GS. N171 serves as a coordination point for Mg(2+).

It belongs to the transketolase family. DXPS subfamily. Homodimer. Mg(2+) serves as cofactor. Requires thiamine diphosphate as cofactor.

It catalyses the reaction D-glyceraldehyde 3-phosphate + pyruvate + H(+) = 1-deoxy-D-xylulose 5-phosphate + CO2. The protein operates within metabolic intermediate biosynthesis; 1-deoxy-D-xylulose 5-phosphate biosynthesis; 1-deoxy-D-xylulose 5-phosphate from D-glyceraldehyde 3-phosphate and pyruvate: step 1/1. Catalyzes the acyloin condensation reaction between C atoms 2 and 3 of pyruvate and glyceraldehyde 3-phosphate to yield 1-deoxy-D-xylulose-5-phosphate (DXP). The sequence is that of 1-deoxy-D-xylulose-5-phosphate synthase from Helicobacter pylori (strain ATCC 700392 / 26695) (Campylobacter pylori).